The following is a 169-amino-acid chain: uncharacterized protein (169 aa).

A Nudix hydrolase domain is found at 28-157; the sequence is ELHLVIHVCI…EFIPYFFLNQ (130 aa). Positions 65–87 match the Nudix box motif; the sequence is AGSALKGETSQQAAEREVQEELG. Mg(2+) contacts are provided by Glu-81 and Glu-85.

Belongs to the Nudix hydrolase family. Mg(2+) serves as cofactor.

This is an uncharacterized protein from Listeria monocytogenes serovar 1/2a (strain ATCC BAA-679 / EGD-e).